Reading from the N-terminus, the 242-residue chain is UPF0073 membrane protein Rv1085c (242 aa).

The next 7 helical transmembrane spans lie at 42–62 (VYSA…SWAV), 67–87 (AGLT…VSAT), 108–128 (SMIF…ALPA), 133–153 (VVLS…MCWP), 159–179 (VGVP…ATIL), 186–206 (ALVL…LYAV), and 222–242 (FHAC…FVVF).

It belongs to the UPF0073 (Hly-III) family.

Its subcellular location is the cell membrane. The chain is UPF0073 membrane protein Rv1085c from Mycobacterium tuberculosis (strain ATCC 25618 / H37Rv).